A 73-amino-acid chain; its full sequence is uncharacterized protein (73 aa).

The helical transmembrane segment at 37–57 threads the bilayer; that stretch reads AIIITVAVVAFGALTLGAIGA.

It is found in the membrane. This is an uncharacterized protein from Natronomonas pharaonis (strain ATCC 35678 / DSM 2160 / CIP 103997 / JCM 8858 / NBRC 14720 / NCIMB 2260 / Gabara) (Halobacterium pharaonis).